Consider the following 295-residue polypeptide: Small ribosomal subunit protein uS2 (295 aa).

Belongs to the universal ribosomal protein uS2 family.

In Rickettsia canadensis (strain McKiel), this protein is Small ribosomal subunit protein uS2.